The following is a 289-amino-acid chain: Bidirectional sugar transporter SWEET10 (289 aa).

The Extracellular portion of the chain corresponds to 1-5 (MAISQ). The helical transmembrane segment at 6–26 (AVLATVFGILGNIISFFVCLA) threads the bilayer. One can recognise a MtN3/slv 1 domain in the interval 11-96 (VFGILGNIIS…SLFFFYAPKK (86 aa)). Over 27–43 (PIPTFVRIYKRKSSEGY) the chain is Cytoplasmic. Residues 44-64 (QSIPYVISLFSAMLWMYYAMI) traverse the membrane as a helical segment. Residues 65 to 70 (KKDAMM) are Extracellular-facing. The chain crosses the membrane as a helical span at residues 71–91 (LITINSFAFVVQIVYISLFFF). Residues 92 to 103 (YAPKKEKTLTVK) are Cytoplasmic-facing. A helical membrane pass occupies residues 104–124 (FVLFVDVLGFGAIFVLTYFII). The Extracellular segment spans residues 125–131 (HANKRVQ). Positions 131–214 (QVLGYICMVF…QMILFLIYKK (84 aa)) constitute a MtN3/slv 2 domain. Residues 132-152 (VLGYICMVFALSVFVAPLGII) traverse the membrane as a helical segment. At 153–165 (RKVIKTKSAEFMP) the chain is on the cytoplasmic side. A helical membrane pass occupies residues 166–186 (FGLSFFLTLSAVMWFFYGLLL). The Extracellular segment spans residues 187 to 190 (KDMN). A helical transmembrane segment spans residues 191 to 211 (IALPNVLGFIFGVLQMILFLI). Topologically, residues 212–289 (YKKPGTKVLE…EKEVFLISKN (78 aa)) are cytoplasmic.

The protein belongs to the SWEET sugar transporter family. Forms heterooligomers with SWEET8.

The protein resides in the cell membrane. Its function is as follows. Mediates both low-affinity uptake and efflux of sugar across the plasma membrane. The polypeptide is Bidirectional sugar transporter SWEET10 (Arabidopsis thaliana (Mouse-ear cress)).